Here is a 127-residue protein sequence, read N- to C-terminus: Lymphocyte antigen 6D (127 aa).

Residues 1-20 form the signal peptide; that stretch reads MKTALLVLLVLAVATSPAWA. One can recognise a UPAR/Ly6 domain in the interval 21–108; that stretch reads LRCHVCTNSA…AAPGHALLSS (88 aa). 5 cysteine pairs are disulfide-bonded: Cys-23–Cys-45, Cys-26–Cys-32, Cys-38–Cys-63, Cys-67–Cys-86, and Cys-87–Cys-92. The GPI-anchor amidated serine moiety is linked to residue Ser-98. The propeptide at 99–127 is removed in mature form; it reads AAPGHALLSSVTLGLATSLSLLTVMALCL.

Lymphoid cells lacking Ly6d, called ALP (all-lymphoid progenitor), retain full lymphoid potential and early thymic seeding activity, whereas cells containing Ly6d, called BLP (B-cell-biased lymphoid progenitor), up-regulate the B-cell specifying factors Ebf1 and Pax5 and behave essentially as B-cell progenitors (at protein level). Thymocytes and B-cells.

The protein localises to the cell membrane. Its function is as follows. May act as a specification marker at earliest stage specification of lymphocytes between B- and T-cell development. Marks the earliest stage of B-cell specification. The protein is Lymphocyte antigen 6D (Ly6d) of Mus musculus (Mouse).